The sequence spans 91 residues: Small ribosomal subunit protein uS19 (91 aa).

Belongs to the universal ribosomal protein uS19 family.

Its function is as follows. Protein S19 forms a complex with S13 that binds strongly to the 16S ribosomal RNA. In Pseudomonas syringae pv. syringae (strain B728a), this protein is Small ribosomal subunit protein uS19.